The sequence spans 632 residues: MEEVDRILIHSLRSCGTEVPEDVQSIRQFNTELIVEAVVRCLRVINPSLGATLSHVLPPGMSARFRIGTSLAQACQDLGYPGEVGYQTFLYSSEPDIRALLIFLAEKLPRDSPEDAHQPAGKSALLQREIAATIKRQLSLPWLPSSCRICALRRSQNSCRLHRFHAQPLSLATDPTLKSIPDERKEYWQCYLPSVTSQLPHLPSVAASLLERNTSELSAKQEWDAEWKSQGLASRLSPEDYRSRKRQRLQKRIQEQLRQCAQLLAENHLPSSSSQDLTDMLKAFNLDGGSDQKKGSRFTRTQRFTYQQDPHTLKEQMQRAAEILPKKDAQDTDAEQQELSSLQEQIDSIEQEIRGLSESNKRLQLTVSQVEGEVNEMRQSCEEKEKIVRVKKRAVELLPDADNNLVKLQALVDASSHRMANLVGQWESHQVRLSEEYRELKRVQQEQEDESSRWMKDAKDLYEKIRGAADEAKRKEELYKQLLSEYESLPKEVSRAAYTQRILEIVSNIKKQKEEITKILSDTKELQKEINNLTGKVDRTFVVTDELVFKDAKKDEPVRKAYKYLAALHENCSQLIQTIEDTGTILREIRDLEEQIETETTKKTLSNLQKILEDYRAIKQENAQLLARIREA.

It belongs to the CCDC22 family.

The protein resides in the endosome. It localises to the cytoplasm. It is found in the cytoskeleton. Its subcellular location is the microtubule organizing center. The protein localises to the centrosome. Functionally, may be involved in regulation of NF-kappa-B signaling. May be involved in copper-dependent atp7a trafficking between the trans-Golgi network and vesicles in the cell periphery. The polypeptide is Coiled-coil domain-containing protein 22 (ccdc22) (Xenopus tropicalis (Western clawed frog)).